Here is a 77-residue protein sequence, read N- to C-terminus: Protein IDA (77 aa).

The signal sequence occupies residues 1 to 26 (MAPCRTMMVLLCFVLFLAASSSCVAA). An RLK5-binding region spans residues 56–69 (GVPIPPSAPSKRHN).

In terms of assembly, interaction with RLK5. In terms of tissue distribution, expressed specifically in the floral abscission zone.

The protein resides in the secreted. The protein localises to the extracellular space. Involved in an ethylene-independent separation step of floral abscission. Promotes abscission zone (AZ) cells rounding. May act with RLK5 and HSL2 as ligand-receptor pairs. This chain is Protein IDA, found in Arabidopsis thaliana (Mouse-ear cress).